Here is a 705-residue protein sequence, read N- to C-terminus: Elongation factor G 2 (705 aa).

Residues 8–290 form the tr-type G domain; sequence ELYRNIGISA…AVLDYLPSPL (283 aa). GTP contacts are provided by residues 17-24, 88-92, and 142-145; these read AHIDAGKT, DTPGH, and NKMD.

It belongs to the TRAFAC class translation factor GTPase superfamily. Classic translation factor GTPase family. EF-G/EF-2 subfamily.

The protein localises to the cytoplasm. Its function is as follows. Catalyzes the GTP-dependent ribosomal translocation step during translation elongation. During this step, the ribosome changes from the pre-translocational (PRE) to the post-translocational (POST) state as the newly formed A-site-bound peptidyl-tRNA and P-site-bound deacylated tRNA move to the P and E sites, respectively. Catalyzes the coordinated movement of the two tRNA molecules, the mRNA and conformational changes in the ribosome. This Bordetella avium (strain 197N) protein is Elongation factor G 2.